Reading from the N-terminus, the 76-residue chain is Acyl carrier protein (76 aa).

Positions 1–74 (MFDKLKEIIA…DVVEYITEHT (74 aa)) constitute a Carrier domain. An O-(pantetheine 4'-phosphoryl)serine modification is found at Ser34.

This sequence belongs to the acyl carrier protein (ACP) family. 4'-phosphopantetheine is transferred from CoA to a specific serine of apo-ACP by AcpS. This modification is essential for activity because fatty acids are bound in thioester linkage to the sulfhydryl of the prosthetic group.

The protein resides in the cytoplasm. It participates in lipid metabolism; fatty acid biosynthesis. In terms of biological role, carrier of the growing fatty acid chain in fatty acid biosynthesis. The polypeptide is Acyl carrier protein (Clostridium perfringens (strain ATCC 13124 / DSM 756 / JCM 1290 / NCIMB 6125 / NCTC 8237 / Type A)).